Here is a 640-residue protein sequence, read N- to C-terminus: Autophagy-related protein 20 (640 aa).

2 stretches are compositionally biased toward polar residues: residues 1-18 and 126-153; these read MSDL…SETR and AETC…PSVS. 2 disordered regions span residues 1–63 and 126–156; these read MSDL…NNKV and AETC…SNRK. Residue Ser2 is modified to N-acetylserine. Residues 140–301 enclose the PX domain; sequence MNGETSASEE…DFLDPNNHNW (162 aa). Arg192, Ser194, Lys218, and Arg267 together coordinate a 1,2-diacyl-sn-glycero-3-phospho-(1D-myo-inositol-3-phosphate). Phosphoserine occurs at positions 361 and 363. 2 coiled-coil regions span residues 475-512 and 562-593; these read LQNE…DNEM and TASI…KVIK.

Belongs to the sorting nexin family. In terms of assembly, forms a complex with SNX4 and ATG17.

The protein resides in the endosome membrane. It localises to the preautophagosomal structure membrane. Functionally, required for cytoplasm to vacuole transport (Cvt), pexophagy and mitophagy. Also involved in endoplasmic reticulum-specific autophagic process and is essential for the survival of cells subjected to severe ER stress. Functions in protein retrieval from the endocytic pathway. Required for proper sorting of the v-SNARE protein SNC1. The protein is Autophagy-related protein 20 (ATG20) of Saccharomyces cerevisiae (strain ATCC 204508 / S288c) (Baker's yeast).